Reading from the N-terminus, the 748-residue chain is Photosystem I P700 chlorophyll a apoprotein A1 (748 aa).

A run of 8 helical transmembrane segments spans residues 70–93, 156–179, 195–219, 291–309, 346–369, 385–411, 433–455, and 530–548; these read VFSA…FHGA, LYTT…FHYH, LNHH…HVSM, TAHH…GHMY, WHAQ…HHMY, LSLF…IFMV, AIIS…LYIH, and FLVH…LILL. 2 residues coordinate [4Fe-4S] cluster: Cys-572 and Cys-581. 2 consecutive transmembrane segments (helical) span residues 588–609 and 662–684; these read HIFL…HFSW and LSAY…MFLF. Position 673 (His-673) interacts with chlorophyll a'. 2 residues coordinate chlorophyll a: Met-681 and Tyr-689. Trp-690 is a binding site for phylloquinone. The chain crosses the membrane as a helical span at residues 722 to 742; that stretch reads AVGVAHYLLGGIATTWAFFLA.

It belongs to the PsaA/PsaB family. In terms of assembly, the PsaA/B heterodimer binds the P700 chlorophyll special pair and subsequent electron acceptors. PSI consists of a core antenna complex that captures photons, and an electron transfer chain that converts photonic excitation into a charge separation. The eukaryotic PSI reaction center is composed of at least 11 subunits. P700 is a chlorophyll a/chlorophyll a' dimer, A0 is one or more chlorophyll a, A1 is one or both phylloquinones and FX is a shared 4Fe-4S iron-sulfur center. is required as a cofactor.

Its subcellular location is the plastid. It localises to the chloroplast thylakoid membrane. It catalyses the reaction reduced [plastocyanin] + hnu + oxidized [2Fe-2S]-[ferredoxin] = oxidized [plastocyanin] + reduced [2Fe-2S]-[ferredoxin]. In terms of biological role, psaA and PsaB bind P700, the primary electron donor of photosystem I (PSI), as well as the electron acceptors A0, A1 and FX. PSI is a plastocyanin-ferredoxin oxidoreductase, converting photonic excitation into a charge separation, which transfers an electron from the donor P700 chlorophyll pair to the spectroscopically characterized acceptors A0, A1, FX, FA and FB in turn. Oxidized P700 is reduced on the lumenal side of the thylakoid membrane by plastocyanin. This Chara vulgaris (Common stonewort) protein is Photosystem I P700 chlorophyll a apoprotein A1.